The following is a 134-amino-acid chain: Auxin-responsive protein SAUR40 (134 aa).

The protein belongs to the ARG7 family. In terms of assembly, interacts with and inhibits PP2C-D subfamily of type 2C phosphatases such as PP2C67/PP2C-D1.

The protein resides in the cytoplasm. Its function is as follows. Provide a mechanistic link between auxin and plasma membrane H(+)-ATPases (PM H(+)-ATPases, e.g. AHA1 and AHA2), and triggers PM H(+)-ATPases activity by promoting phosphorylation of their C-terminal autoinhibitory domain as a result of PP2C-D subfamily of type 2C phosphatases inhibition, thus leading to the acidification of the apoplast and the facilitation of solutes and water uptake to drive cell expansion. Plays a role in the regulation of cell expansion, root meristem patterning and auxin transport. This Arabidopsis thaliana (Mouse-ear cress) protein is Auxin-responsive protein SAUR40.